The following is a 63-amino-acid chain: Large ribosomal subunit protein uL29 (63 aa).

It belongs to the universal ribosomal protein uL29 family.

The protein is Large ribosomal subunit protein uL29 of Flavobacterium johnsoniae (strain ATCC 17061 / DSM 2064 / JCM 8514 / BCRC 14874 / CCUG 350202 / NBRC 14942 / NCIMB 11054 / UW101) (Cytophaga johnsonae).